Reading from the N-terminus, the 82-residue chain is Metallothionein-like protein 2A (82 aa).

The protein belongs to the metallothionein superfamily. Type 15 family. As to expression, expressed in stems, leaves, rachis, inflorescences and seeds.

Metallothioneins have a high content of cysteine residues that bind various heavy metals. This chain is Metallothionein-like protein 2A (MT2A), found in Oryza sativa subsp. japonica (Rice).